The following is a 350-amino-acid chain: 2,5-dihydroxypyridine 5,6-dioxygenase (350 aa).

Fe cation is bound by residues histidine 265, histidine 318, and aspartate 320.

Fe(2+) serves as cofactor.

It catalyses the reaction 2,5-dihydroxypyridine + O2 = N-formylmaleamate + H(+). Its pathway is cofactor degradation; nicotinate degradation. In terms of biological role, catalyzes the dioxygenolytic ring cleavage of 2,5-dihydroxypyridine between carbons 5 and 6 generating N-formylmaleamate in the aerobic nicotinate degradation pathway. This is 2,5-dihydroxypyridine 5,6-dioxygenase (nicX) from Pseudomonas putida (strain ATCC 47054 / DSM 6125 / CFBP 8728 / NCIMB 11950 / KT2440).